The primary structure comprises 25 residues: Endoglucanase 1 (25 aa).

Positions 1-25 are disordered; it reads YDASLKPNLQIPQKNIPNNDAVNIK. The span at 10–25 shows a compositional bias: polar residues; the sequence is QIPQKNIPNNDAVNIK.

It catalyses the reaction Endohydrolysis of (1-&gt;4)-beta-D-glucosidic linkages in cellulose, lichenin and cereal beta-D-glucans.. Functionally, this enzyme hydrolyzes cellotetraose, cellopentaose, and cellohexaose to cellobiose and cellotriose but does not hydrolyze cellobiose or cellotriose. This chain is Endoglucanase 1, found in Ruminiclostridium josui (Clostridium josui).